Consider the following 297-residue polypeptide: 4-hydroxy-tetrahydrodipicolinate synthase (297 aa).

Thr-49 serves as a coordination point for pyruvate. Tyr-137 (proton donor/acceptor) is an active-site residue. Lys-166 functions as the Schiff-base intermediate with substrate in the catalytic mechanism. Ile-208 serves as a coordination point for pyruvate.

The protein belongs to the DapA family. Homotetramer; dimer of dimers.

It localises to the cytoplasm. It carries out the reaction L-aspartate 4-semialdehyde + pyruvate = (2S,4S)-4-hydroxy-2,3,4,5-tetrahydrodipicolinate + H2O + H(+). It functions in the pathway amino-acid biosynthesis; L-lysine biosynthesis via DAP pathway; (S)-tetrahydrodipicolinate from L-aspartate: step 3/4. Functionally, catalyzes the condensation of (S)-aspartate-beta-semialdehyde [(S)-ASA] and pyruvate to 4-hydroxy-tetrahydrodipicolinate (HTPA). The chain is 4-hydroxy-tetrahydrodipicolinate synthase from Parabacteroides distasonis (strain ATCC 8503 / DSM 20701 / CIP 104284 / JCM 5825 / NCTC 11152).